The chain runs to 333 residues: G-protein coupled receptor 146 (333 aa).

Residues 1–21 (MWSCEDLNYTNSGEEQYLCNE) lie on the Extracellular side of the membrane. N-linked (GlcNAc...) asparagine glycosylation is present at asparagine 8. The helical transmembrane segment at 22–42 (FHLFLFIFSVLYLIICFPVGL) threads the bilayer. Over 43–65 (CYNVQLVLVNLYNKATMTMPDVY) the chain is Cytoplasmic. A helical transmembrane segment spans residues 66–86 (FVNMAIAGLIINAVAPVYLFG). At 87–102 (PAYTKWSLWSFGNEVY) the chain is on the extracellular side. The chain crosses the membrane as a helical span at residues 103–123 (ITLLILFNVSSLVIMYSTTLL). The Cytoplasmic portion of the chain corresponds to 124-146 (SLDYYIECALPRTYMSSVYNTKH). Residues 147–167 (VCGFIWGGAVLTSFSSLLFYI) traverse the membrane as a helical segment. Residues 168–189 (CNHVSTKIIECSKMQNREAADA) lie on the Extracellular side of the membrane. The chain crosses the membrane as a helical span at residues 190–210 (IMVLIGYVVPIIAVIYALVLI). Residues 211–234 (LQIRKEATPLDQESGRLDPSVHRL) lie on the Cytoplasmic side of the membrane. The helical transmembrane segment at 235–255 (LIATVCTQFILWTPYYVTLLV) threads the bilayer. Topologically, residues 256–275 (NTFMDARVKSSNTFYIRIFQ) are extracellular. A helical transmembrane segment spans residues 276–296 (FTEGLSNFLAFSSSFVLPLIH). The Cytoplasmic segment spans residues 297–333 (RHINKNFSGKLQRLLKRLHCGSQGCTHEHTVVQQVMT).

This sequence belongs to the G-protein coupled receptor 1 family.

It is found in the cell membrane. G-protein coupled receptor required for the regulation of plasma cholesterol levels. The sequence is that of G-protein coupled receptor 146 (gpr146) from Xenopus laevis (African clawed frog).